We begin with the raw amino-acid sequence, 32 residues long: Kappa-theraphotoxin-Gr2b (32 aa).

Cystine bridges form between C2-C16, C9-C21, and C15-C25.

This sequence belongs to the neurotoxin 30 (phrixotoxin) family. Expressed by the venom gland.

Its subcellular location is the secreted. In terms of biological role, binds the voltage-sensor domain of the potassium channel KvAP (from the archaeon Aeropyrum pernix) and affects channel gating. The polypeptide is Kappa-theraphotoxin-Gr2b (Grammostola rosea (Chilean rose tarantula)).